Here is a 316-residue protein sequence, read N- to C-terminus: Putative phosphoribosylaminoimidazole-succinocarboxamide synthase 2 (316 aa).

Belongs to the SAICAR synthetase family.

The catalysed reaction is 5-amino-1-(5-phospho-D-ribosyl)imidazole-4-carboxylate + L-aspartate + ATP = (2S)-2-[5-amino-1-(5-phospho-beta-D-ribosyl)imidazole-4-carboxamido]succinate + ADP + phosphate + 2 H(+). It functions in the pathway purine metabolism; IMP biosynthesis via de novo pathway; 5-amino-1-(5-phospho-D-ribosyl)imidazole-4-carboxamide from 5-amino-1-(5-phospho-D-ribosyl)imidazole-4-carboxylate: step 1/2. The polypeptide is Putative phosphoribosylaminoimidazole-succinocarboxamide synthase 2 (purC2) (Agrobacterium fabrum (strain C58 / ATCC 33970) (Agrobacterium tumefaciens (strain C58))).